The primary structure comprises 253 residues: uncharacterized protein (253 aa).

The chain crosses the membrane as a helical span at residues 62-78; it reads WCSIGWSIGALIIFLVY. Residues 141 to 158 are compositionally biased toward low complexity; it reads TTPQTTTPEIPSSTEPQE. The segment at 141–225 is disordered; sequence TTPQTTTPEI…HDNQPLEERH (85 aa). The span at 200 to 216 shows a compositional bias: acidic residues; the sequence is NVEDEPPPNKPEEEEDH.

Its subcellular location is the host membrane. This is an uncharacterized protein from Aedes vexans (Inland floodwater mosquito).